A 366-amino-acid chain; its full sequence is MEVSEGSVTVEVPEERHGASEGSGEGVFYNPVQELNRDITAAVLRTVSDDCDEYLDAMAASGIRSVRAAAAGYDVTACDIDDDAVALTRRNLDRNGVDGTVHHRNVNAHMHESAHDVVDLDPFGTPMAFADAAVRSAGEYLCVTATDTAPLCGAHFESGVRSYDAVPRNTEFHAEMGLRVLLSALVRTAARHDIAAEPVLSHVTSHYVRTYLRVDSGARAADALLEHLGYIDHCQRCLWRDHERGRVPDPTTTCPHCGQSTWTAGPVWLGPAHDAAFVDDVAGAIPDSFGTADKARDLLSTVATELHQPTHYDQHKLYKRWNEPNIAMDDFLAALRAAGHEASRTHYGGTTFKTDADVADIRNAVE.

A disordered region spans residues 1–28; it reads MEVSEGSVTVEVPEERHGASEGSGEGVF. The Trm1 methyltransferase domain maps to 1-365; it reads MEVSEGSVTV…ADVADIRNAV (365 aa). S-adenosyl-L-methionine contacts are provided by R37, R64, and D79. Zn(2+) is bound by residues C234, C237, C254, and C257.

This sequence belongs to the class I-like SAM-binding methyltransferase superfamily. Trm1 family.

It catalyses the reaction guanosine(26) in tRNA + 2 S-adenosyl-L-methionine = N(2)-dimethylguanosine(26) in tRNA + 2 S-adenosyl-L-homocysteine + 2 H(+). In terms of biological role, dimethylates a single guanine residue at position 26 of a number of tRNAs using S-adenosyl-L-methionine as donor of the methyl groups. The protein is tRNA (guanine(26)-N(2))-dimethyltransferase of Natronomonas pharaonis (strain ATCC 35678 / DSM 2160 / CIP 103997 / JCM 8858 / NBRC 14720 / NCIMB 2260 / Gabara) (Halobacterium pharaonis).